The primary structure comprises 345 residues: Ferrochelatase (345 aa).

2 residues coordinate Fe cation: His-215 and Glu-296.

The protein belongs to the ferrochelatase family.

It is found in the cytoplasm. It catalyses the reaction heme b + 2 H(+) = protoporphyrin IX + Fe(2+). It functions in the pathway porphyrin-containing compound metabolism; protoheme biosynthesis; protoheme from protoporphyrin-IX: step 1/1. Functionally, catalyzes the ferrous insertion into protoporphyrin IX. This Rhodopseudomonas palustris (strain HaA2) protein is Ferrochelatase.